A 1205-amino-acid polypeptide reads, in one-letter code: Bromodomain and PHD finger-containing protein 3 (1205 aa).

Disordered regions lie at residues 1 to 27 (MRKPRRKSRQNAEGRRSPSPYSLKCSP) and 75 to 121 (NSNK…SFRM). Phosphoserine is present on serine 17. A compositionally biased stretch (polar residues) spans 75–84 (NSNKENSEQP). The span at 89-99 (KSKKPSSKGKK) shows a compositional bias: basic residues. The PHD-type 1 zinc-finger motif lies at 212-262 (DAFCCVCLDDECHNSNVILFCDICNLAVHQECYGVPYIPEGQWLCRCCLQS). A C2HC pre-PHD-type zinc finger spans residues 266–299 (PVDCILCPNKGGAFKQTSDGHWAHVVCAIWIPEV). Residues 323-387 (LTCYICKQKG…RKTAYCEAHS (65 aa)) form a PHD-type 2 zinc finger. Residues 387–472 (SPPGAATARR…AGQDTPSTLP (86 aa)) are disordered. Serine 400 and serine 403 each carry phosphoserine. Acidic residues predominate over residues 417–432 (DGEEEEEEEVEEEEQE). The segment covering 444–456 (VPKKSKMSLKQKI) has biased composition (basic residues). Lysine 447, lysine 449, and lysine 671 each carry N6-acetyllysine. One can recognise a Bromo domain in the interval 589 to 693 (LELMPFNVLL…DLGGAILRHA (105 aa)). Residues serine 713 and serine 740 each carry the phosphoserine modification. A disordered region spans residues 779 to 897 (RQKLAQPPPP…LQLGNEPLQR (119 aa)). A compositionally biased stretch (acidic residues) spans 817-827 (LQEEPEDDGDR). Residues 839 to 851 (EPTGPAPSLSEQE) show a composition bias toward low complexity. At serine 900 the chain carries Phosphoserine. 2 disordered regions span residues 907–926 (LSLMAPDTPAGTPLSGVGRR) and 931–1015 (FKKA…SECS). Positions 942–955 (RSPDRVLENGEDHG) are enriched in basic and acidic residues. 2 positions are modified to phosphoserine: serine 962 and serine 965. Basic and acidic residues predominate over residues 980–991 (SCSESEGERSPQ). A PWWP domain is found at 1076–1159 (PLELVWAKCR…RDKVLPLGVE (84 aa)).

In terms of assembly, component of some HBO1 complex composed of KAT7/HBO1, MEAF6, ING4 or ING5, and BRPF3. Component of the MOZ/MORF complex composed at least of ING5, KAT6A, KAT6B, MEAF6 and one of BRPF1, BRD1/BRPF2 and BRPF3. Interacts with KAT7/HBO1; the interaction is direct.

Its subcellular location is the nucleus. Scaffold subunit of various histone acetyltransferase (HAT) complexes, such as the MOZ/MORF and HBO1 complexes, which have a histone H3 acetyltransferase activity. Plays a role in DNA replication initiation by directing KAT7/HBO1 specificity towards histone H3 'Lys-14' acetylation (H3K14ac), thereby facilitating the activation of replication origins. Component of the MOZ/MORF complex which has a histone H3 acetyltransferase activity. The protein is Bromodomain and PHD finger-containing protein 3 of Homo sapiens (Human).